The primary structure comprises 1480 residues: Cystic fibrosis transmembrane conductance regulator (1480 aa).

Over 1–77 (MQRSPLEKAS…KLINALRRCF (77 aa)) the chain is Cytoplasmic. Residues 78–98 (FWRFMFYGILLYLGEVTKAVQ) traverse the membrane as a helical segment. An ABC transmembrane type-1 1 domain is found at 81–365 (FMFYGILLYL…WAVQTWYDSL (285 aa)). The Extracellular segment spans residues 99 to 122 (PLLLGRIIASYDPDNKTERSIAIY). The chain crosses the membrane as a helical span at residues 123 to 146 (LGIGLCLLFIVRTLLLHPAIFGLH). At 147–195 (HIGMQMRIAMFSLIYKKTLKLSSRVLDKISIGQLVSLLSNNLNKFDEGL) the chain is on the cytoplasmic side. A helical transmembrane segment spans residues 196–216 (ALAHFVWIAPLQVALLMGLIW). Residues 217–222 (ELLQAS) are Extracellular-facing. A helical transmembrane segment spans residues 223 to 243 (VFCGLGFLIVLALFQAGLGRM). Residues 244–298 (MMKYRDQRAGKINERLVITSEMIENIQSVKAYCWEEAMEKMIENLRQTELKLTRK) are Cytoplasmic-facing. The helical transmembrane segment at 299–319 (AAYVRYFNSSAFFFSGFFVVF) threads the bilayer. Residues 320–339 (LSVLPYALIKGIILRKIFTT) lie on the Extracellular side of the membrane. The chain crosses the membrane as a helical span at residues 340–358 (ISFCIVLRMAVTRQFPWAV). The Cytoplasmic portion of the chain corresponds to 359–858 (QTWYDSLGAI…YLRYITLHKS (500 aa)). ATP is bound by residues Trp-401, Ser-434, 458–465 (GSTGAGKT), and Gln-493. One can recognise an ABC transporter 1 domain in the interval 423–646 (NGHDNLFFSN…RPDFSSKLMG (224 aa)). A lipid anchor (S-palmitoyl cysteine) is attached at Cys-524. A phosphoserine mark is found at Ser-549 and Ser-660. The tract at residues 654–831 (SSERRNSILT…EEINEEDLKE (178 aa)) is disordered R region. Phosphoserine; by PKA is present on Ser-670. A Phosphoserine modification is found at Ser-686. A Glycyl lysine isopeptide (Lys-Gly) (interchain with G-Cter in ubiquitin) cross-link involves residue Lys-688. Phosphoserine is present on residues Ser-700 and Ser-712. Phosphothreonine is present on Thr-717. Ser-737, Ser-753, Ser-768, Ser-790, Ser-795, and Ser-813 each carry phosphoserine. The chain crosses the membrane as a helical span at residues 859–879 (LIFVLIWCLVIFLAEVAASLV). Residues 859–1155 (LIFVLIWCLV…AVNSSIDVDS (297 aa)) enclose the ABC transmembrane type-1 2 domain. Residues 880–918 (VLWLLGNTSFQDKGNSTYSRNNSYAVIITNTSSYYVFYI) lie on the Extracellular side of the membrane. N-linked (GlcNAc...) asparagine glycans are attached at residues Asn-894, Asn-900, and Asn-909. The discontinuously helical transmembrane segment at 919 to 939 (YVGVADTLLALGFFRGLPLVH) threads the bilayer. At 940–990 (TLITVSKILHHKMLHSVLQAPMSTLNTLKAGGILNRFSKDIAILDDLLPLT) the chain is on the cytoplasmic side. A helical transmembrane segment spans residues 991–1011 (IFDFIQLLLIVIGAIAVVSVL). Residues 1012–1013 (QP) are Extracellular-facing. Residues 1014–1034 (YIFLATVPVIAAFILLRAYFL) traverse the membrane as a helical segment. Over 1035–1095 (QTSQQLKQLE…TANWFLYLST (61 aa)) the chain is Cytoplasmic. Residues 1096 to 1116 (LRWFQMRIEMIFVIFFIAVTF) traverse the membrane as a helical segment. At 1117 to 1130 (ISILTTGEGEGTVG) the chain is on the extracellular side. A helical transmembrane segment spans residues 1131–1151 (IILTLAMNIMSTLQWAVNSSI). At 1152–1480 (DVDSLMRSVS…TEEEVQETRL (329 aa)) the chain is on the cytoplasmic side. Residues 1210–1443 (MTIKDLTAKY…KSLFQQAISH (234 aa)) form the ABC transporter 2 domain. ATP is bound by residues Tyr-1219 and 1244–1251 (GRTGSGKS). The interaction with GORASP2 stretch occupies residues 1386-1480 (RALKQAFADC…TEEEVQETRL (95 aa)). A lipid anchor (S-palmitoyl cysteine) is attached at Cys-1395. Phosphoserine occurs at positions 1444 and 1456. The tract at residues 1452 to 1480 (HRNSSKYKSRPQIASLKEETEEEVQETRL) is disordered. Residues 1470 to 1480 (ETEEEVQETRL) show a composition bias toward acidic residues. The PDZ-binding signature appears at 1478 to 1480 (TRL).

The protein belongs to the ABC transporter superfamily. ABCC family. CFTR transporter (TC 3.A.1.202) subfamily. In terms of assembly, monomer; does not require oligomerization for channel activity. May form oligomers in the membrane. Interacts with SLC26A3, SLC26A6 and NHERF1. Interacts with SHANK2. Interacts with MYO6. Interacts (via C-terminus) with GOPC (via PDZ domain); this promotes CFTR internalization and thereby decreases channel activity. Interacts with SLC4A7 through NHERF1. Found in a complex with MYO5B and RAB11A. Interacts with ANO1. Interacts with SLC26A8. Interacts with AHCYL1; the interaction increases CFTR activity. Interacts with CSE1L. The core-glycosylated form interacts with GORASP2 (via PDZ GRASP-type 1 domain) in respone to ER stress. Interacts with MARCHF2; the interaction leads to CFTR ubiqtuitination and degradation. Interacts with ADGRG2. In terms of processing, N-glycosylated. Post-translationally, phosphorylated; cAMP treatment promotes phosphorylation and activates the channel. Dephosphorylation decreases the ATPase activity (in vitro). Phosphorylation at PKA sites activates the channel. Phosphorylation at PKC sites enhances the response to phosphorylation by PKA. Phosphorylated by AMPK; this inhibits channel activity. Ubiquitinated, leading to its degradation in the lysosome. Deubiquitination by USP10 in early endosomes enhances its endocytic recycling to the cell membrane. Ubiquitinated by RNF185 during ER stress. Ubiquitinated by MARCHF2.

It localises to the apical cell membrane. Its subcellular location is the early endosome membrane. The protein localises to the cell membrane. It is found in the recycling endosome membrane. The protein resides in the endoplasmic reticulum membrane. It localises to the nucleus. The enzyme catalyses ATP + H2O + closed Cl(-) channel = ADP + phosphate + open Cl(-) channel.. It catalyses the reaction chloride(in) = chloride(out). It carries out the reaction hydrogencarbonate(in) = hydrogencarbonate(out). The catalysed reaction is ATP + H2O = ADP + phosphate + H(+). Its function is as follows. Epithelial ion channel that plays an important role in the regulation of epithelial ion and water transport and fluid homeostasis. Mediates the transport of chloride ions across the cell membrane. Possesses an intrinsic ATPase activity and utilizes ATP to gate its channel; the passive flow of anions through the channel is gated by cycles of ATP binding and hydrolysis by the ATP-binding domains. The ion channel is also permeable to HCO(3)(-); selectivity depends on the extracellular chloride concentration. Exerts its function also by modulating the activity of other ion channels and transporters. Contributes to the regulation of the pH and the ion content of the epithelial fluid layer. Modulates the activity of the epithelial sodium channel (ENaC) complex, in part by regulating the cell surface expression of the ENaC complex. May regulate bicarbonate secretion and salvage in epithelial cells by regulating the transporter SLC4A7. Can inhibit the chloride channel activity of ANO1. Plays a role in the chloride and bicarbonate homeostasis during sperm epididymal maturation and capacitation. In Plecturocebus moloch (Dusky titi monkey), this protein is Cystic fibrosis transmembrane conductance regulator.